A 185-amino-acid polypeptide reads, in one-letter code: Ribosome-recycling factor (185 aa).

Belongs to the RRF family.

It localises to the cytoplasm. Responsible for the release of ribosomes from messenger RNA at the termination of protein biosynthesis. May increase the efficiency of translation by recycling ribosomes from one round of translation to another. The polypeptide is Ribosome-recycling factor (Geobacter metallireducens (strain ATCC 53774 / DSM 7210 / GS-15)).